Reading from the N-terminus, the 297-residue chain is N-acetylmuramic acid 6-phosphate etherase (297 aa).

The region spanning 55-218 (AVAALKSGGR…STGAMVKFGK (164 aa)) is the SIS domain. Residue Glu83 is the Proton donor of the active site. The active site involves Glu114.

The protein belongs to the GCKR-like family. MurNAc-6-P etherase subfamily. Homodimer.

It catalyses the reaction N-acetyl-D-muramate 6-phosphate + H2O = N-acetyl-D-glucosamine 6-phosphate + (R)-lactate. It functions in the pathway amino-sugar metabolism; 1,6-anhydro-N-acetylmuramate degradation. The protein operates within amino-sugar metabolism; N-acetylmuramate degradation. Its pathway is cell wall biogenesis; peptidoglycan recycling. Its function is as follows. Specifically catalyzes the cleavage of the D-lactyl ether substituent of MurNAc 6-phosphate, producing GlcNAc 6-phosphate and D-lactate. Together with AnmK, is also required for the utilization of anhydro-N-acetylmuramic acid (anhMurNAc) either imported from the medium or derived from its own cell wall murein, and thus plays a role in cell wall recycling. The chain is N-acetylmuramic acid 6-phosphate etherase from Salmonella dublin (strain CT_02021853).